The following is a 356-amino-acid chain: Serine/threonine-protein phosphatase 4 regulatory subunit 2 (356 aa).

The segment covering 202–240 (NEGAGDDEDDDQDYVDEDSATSEDEEEDVEEEEEEEGPE) has biased composition (acidic residues). The disordered stretch occupies residues 202-335 (NEGAGDDEDD…PQLTTSATNV (134 aa)). Residues 326–335 (PQLTTSATNV) show a composition bias toward polar residues.

This sequence belongs to the PPP4R2 family. Regulatory subunit (R2) of the histone H2A phosphatase complex (HTP-C) consisting of PPH3, PSY2 and PSY4.

The protein resides in the nucleus. Functionally, regulatory subunit of the histone H2A phosphatase complex, which dephosphorylates H2AS128ph (gamma-H2A) that has been displaced from sites of DNA lesions in the double-stranded DNA break repair process. Dephosphorylation is necessary for efficient recovery from the DNA damage checkpoint. The chain is Serine/threonine-protein phosphatase 4 regulatory subunit 2 (PSY4) from Eremothecium gossypii (strain ATCC 10895 / CBS 109.51 / FGSC 9923 / NRRL Y-1056) (Yeast).